Reading from the N-terminus, the 435-residue chain is Glutamate-1-semialdehyde 2,1-aminomutase (435 aa).

Residue lysine 266 is modified to N6-(pyridoxal phosphate)lysine.

The protein belongs to the class-III pyridoxal-phosphate-dependent aminotransferase family. HemL subfamily. In terms of assembly, homodimer. Pyridoxal 5'-phosphate serves as cofactor.

The protein localises to the cytoplasm. The catalysed reaction is (S)-4-amino-5-oxopentanoate = 5-aminolevulinate. It functions in the pathway porphyrin-containing compound metabolism; protoporphyrin-IX biosynthesis; 5-aminolevulinate from L-glutamyl-tRNA(Glu): step 2/2. The sequence is that of Glutamate-1-semialdehyde 2,1-aminomutase from Coxiella burnetii (strain CbuG_Q212) (Coxiella burnetii (strain Q212)).